A 306-amino-acid chain; its full sequence is Curved DNA-binding protein (306 aa).

Positions 5–69 constitute a J domain; sequence DYYAIMGVKP…QRRAEYDQMW (65 aa).

It localises to the cytoplasm. The protein localises to the nucleoid. DNA-binding protein that preferentially recognizes a curved DNA sequence. It is probably a functional analog of DnaJ; displays overlapping activities with DnaJ, but functions under different conditions, probably acting as a molecular chaperone in an adaptive response to environmental stresses other than heat shock. Lacks autonomous chaperone activity; binds native substrates and targets them for recognition by DnaK. Its activity is inhibited by the binding of CbpM. The polypeptide is Curved DNA-binding protein (Shigella dysenteriae serotype 1 (strain Sd197)).